Here is a 248-residue protein sequence, read N- to C-terminus: Probable transcriptional regulatory protein HCH_04926 (248 aa).

This sequence belongs to the TACO1 family.

The protein localises to the cytoplasm. This is Probable transcriptional regulatory protein HCH_04926 from Hahella chejuensis (strain KCTC 2396).